Consider the following 209-residue polypeptide: Outer-membrane lipoprotein carrier protein (209 aa).

The signal sequence occupies residues 1–24 (MTRYVISRLSAIALLALAPALALA).

This sequence belongs to the LolA family. Monomer.

It localises to the periplasm. Functionally, participates in the translocation of lipoproteins from the inner membrane to the outer membrane. Only forms a complex with a lipoprotein if the residue after the N-terminal Cys is not an aspartate (The Asp acts as a targeting signal to indicate that the lipoprotein should stay in the inner membrane). The protein is Outer-membrane lipoprotein carrier protein of Bordetella avium (strain 197N).